The chain runs to 317 residues: Flagellar hook-associated protein 3 (317 aa).

The protein belongs to the bacterial flagellin family.

It is found in the secreted. It localises to the bacterial flagellum. This chain is Flagellar hook-associated protein 3 (flgL), found in Salmonella typhimurium (strain LT2 / SGSC1412 / ATCC 700720).